The chain runs to 374 residues: Putative cullin-like protein 2 (374 aa).

This sequence belongs to the cullin family.

The sequence is that of Putative cullin-like protein 2 from Arabidopsis thaliana (Mouse-ear cress).